The chain runs to 351 residues: Transaldolase (351 aa).

The active-site Schiff-base intermediate with substrate is the Lys138.

The protein belongs to the transaldolase family. Type 2 subfamily.

The protein localises to the cytoplasm. The enzyme catalyses D-sedoheptulose 7-phosphate + D-glyceraldehyde 3-phosphate = D-erythrose 4-phosphate + beta-D-fructose 6-phosphate. The protein operates within carbohydrate degradation; pentose phosphate pathway; D-glyceraldehyde 3-phosphate and beta-D-fructose 6-phosphate from D-ribose 5-phosphate and D-xylulose 5-phosphate (non-oxidative stage): step 2/3. Functionally, transaldolase is important for the balance of metabolites in the pentose-phosphate pathway. In Neisseria meningitidis serogroup C / serotype 2a (strain ATCC 700532 / DSM 15464 / FAM18), this protein is Transaldolase.